We begin with the raw amino-acid sequence, 104 residues long: MKVKKGDTVVVISGKDKGAKGKVIQAFPQRDKVLVEGVNRIKKHTKVSRTERGAQSGGIVTQEAPIHVSNVMVVDSDGQPTRVGYRIGEDGKKVRISRRNGKDI.

It belongs to the universal ribosomal protein uL24 family. Part of the 50S ribosomal subunit.

Its function is as follows. One of two assembly initiator proteins, it binds directly to the 5'-end of the 23S rRNA, where it nucleates assembly of the 50S subunit. One of the proteins that surrounds the polypeptide exit tunnel on the outside of the subunit. This is Large ribosomal subunit protein uL24 from Saccharopolyspora erythraea (strain ATCC 11635 / DSM 40517 / JCM 4748 / NBRC 13426 / NCIMB 8594 / NRRL 2338).